The following is a 1028-amino-acid chain: Receptor-type guanylate cyclase gcy-13 (1028 aa).

Asparagine 58, asparagine 156, asparagine 324, asparagine 337, asparagine 377, and asparagine 394 each carry an N-linked (GlcNAc...) asparagine glycan. The chain crosses the membrane as a helical span at residues 438–458 (IVVIVAVIIVLCCAAAAIAAF). At 459–1028 (LVIKARRDEE…WLLGMKEESA (570 aa)) the chain is on the cytoplasmic side. Residues 491 to 511 (ESHHSSRSLQSNSTTTTGTTG) are disordered. The segment covering 497 to 511 (RSLQSNSTTTTGTTG) has biased composition (low complexity). Positions 499–770 (LQSNSTTTTG…DMVNKLMKNM (272 aa)) constitute a Protein kinase domain. A coiled-coil region spans residues 786–817 (SVLEKHASSLEDEVQERMKELVEEKKKSDILL). The Guanylate cyclase domain occupies 844–974 (TIFFSDVVGF…DTVNTASRME (131 aa)).

It belongs to the adenylyl cyclase class-4/guanylyl cyclase family. In terms of tissue distribution, expressed bilaterally in RIM interneurons.

It localises to the cell membrane. The catalysed reaction is GTP = 3',5'-cyclic GMP + diphosphate. Its function is as follows. Guanylate cyclase involved in the production of the second messenger cGMP. The protein is Receptor-type guanylate cyclase gcy-13 of Caenorhabditis elegans.